A 718-amino-acid chain; its full sequence is Polyribonucleotide nucleotidyltransferase (718 aa).

Mg(2+)-binding residues include Asp-497 and Asp-503. Residues 564-623 enclose the KH domain; the sequence is PRLLTLKIEPEHIGMVIGPGGKTIKGITEQTSCKIDIADDGTVTIASSEGERAERARQMI. One can recognise an S1 motif domain in the interval 633–701; it reads GEVYLGRVTR…SKGRLNLTRL (69 aa).

The protein belongs to the polyribonucleotide nucleotidyltransferase family. In terms of assembly, interacts with RNase E (rne). It depends on Mg(2+) as a cofactor.

The protein localises to the cytoplasm. The enzyme catalyses RNA(n+1) + phosphate = RNA(n) + a ribonucleoside 5'-diphosphate. Its function is as follows. Involved in mRNA degradation. Catalyzes the phosphorolysis of single-stranded polyribonucleotides processively in the 3'- to 5'-direction. This chain is Polyribonucleotide nucleotidyltransferase, found in Synechocystis sp. (strain ATCC 27184 / PCC 6803 / Kazusa).